A 263-amino-acid polypeptide reads, in one-letter code: 22 kDa alpha-zein 16 (263 aa).

The signal sequence occupies residues 1–21 (MATKILALLALLALLVSATNA).

Belongs to the zein family. As to expression, expressed in developing endosperm.

In terms of biological role, zeins are major seed storage proteins. This Zea mays (Maize) protein is 22 kDa alpha-zein 16.